A 120-amino-acid polypeptide reads, in one-letter code: Large ribosomal subunit protein uL14 (120 aa).

This sequence belongs to the universal ribosomal protein uL14 family. Part of the 50S ribosomal subunit. Forms a cluster with proteins L3 and L19. In the 70S ribosome, L14 and L19 interact and together make contacts with the 16S rRNA in bridges B5 and B8.

Functionally, binds to 23S rRNA. Forms part of two intersubunit bridges in the 70S ribosome. This Aster yellows witches'-broom phytoplasma (strain AYWB) protein is Large ribosomal subunit protein uL14.